The following is a 323-amino-acid chain: Zinc finger C2HC domain-containing protein 1A (323 aa).

A C2HC/C3H-type 1 zinc finger spans residues 7-36; the sequence is ELRPCKICGRTFFPATLKKHVPICQKTSVK. The Zn(2+) site is built by Cys11, Cys14, His26, and Cys30. The tract at residues 35 to 75 is disordered; sequence VKKRKTFESSRQRAEGTDINTVKPVKPRPEPPKKQSNWKRK. The span at 40-50 shows a compositional bias: basic and acidic residues; that stretch reads TFESSRQRAEG. Residues 110 to 139 form a C2HC/C3H-type 2 zinc finger; that stretch reads DYVQCPYCQRRFNQNAADRHINFCKEQSAR. 4 residues coordinate Zn(2+): Cys114, Cys117, His129, and Cys133. The disordered stretch occupies residues 138–273; it reads ARMGQKIKGG…EAAMGYDSSD (136 aa). Residues 208-226 are compositionally biased toward polar residues; sequence KYQTQSPAHKNSTMVTSPQ.

Belongs to the ZC2HC1 family. It depends on Zn(2+) as a cofactor.

In Xenopus laevis (African clawed frog), this protein is Zinc finger C2HC domain-containing protein 1A (zc2hc1a).